Consider the following 429-residue polypeptide: GTPase Obg (429 aa).

The Obg domain occupies 1 to 158 (MFVDQVKIYV…RNVQLELKVL (158 aa)). Residues 124-145 (RGNKRFATPANPAPELSENGEP) form a disordered region. Residues 159-329 (ADVGLVGFPS…LLLAIADKLE (171 aa)) form the OBG-type G domain. Residues 165-172 (GFPSVGKS), 190-194 (FTTIV), 212-215 (DLPG), 282-285 (NKMD), and 310-312 (SAV) contribute to the GTP site. Residues Ser-172 and Thr-192 each contribute to the Mg(2+) site. Residues 351-429 (KYVAEEPDFE…LLDYEFEFMD (79 aa)) enclose the OCT domain.

The protein belongs to the TRAFAC class OBG-HflX-like GTPase superfamily. OBG GTPase family. In terms of assembly, monomer. Mg(2+) serves as cofactor.

Its subcellular location is the cytoplasm. In terms of biological role, an essential GTPase which binds GTP, GDP and possibly (p)ppGpp with moderate affinity, with high nucleotide exchange rates and a fairly low GTP hydrolysis rate. Plays a role in control of the cell cycle, stress response, ribosome biogenesis and in those bacteria that undergo differentiation, in morphogenesis control. This Listeria monocytogenes serotype 4b (strain F2365) protein is GTPase Obg.